The sequence spans 69 residues: U2-agatoxin-Ao1e (69 aa).

An N-terminal signal peptide occupies residues Met1–Ala20. A propeptide spanning residues Val21–Arg34 is cleaved from the precursor. 3 disulfides stabilise this stretch: Cys37/Cys53, Cys44/Cys58, and Cys52/Cys68.

It belongs to the neurotoxin 01 (U2-agtx) family. In terms of tissue distribution, expressed by the venom gland.

It is found in the secreted. Functionally, insect active toxin causing rapid but reversible paralysis in crickets. No activity shown in mammals. Does not show effect on mammalian voltage-gated calcium channels. This chain is U2-agatoxin-Ao1e, found in Agelena orientalis (Funnel-web spider).